The sequence spans 58 residues: Large ribosomal subunit protein eL24 (58 aa).

Zn(2+)-binding residues include Cys-6, Cys-9, Cys-32, and Cys-36. The C4-type zinc-finger motif lies at 6–36 (CSFCGYDIEPGTGKMYVRRDGRVFYFCSGKC).

It belongs to the eukaryotic ribosomal protein eL24 family. In terms of assembly, part of the 50S ribosomal subunit. Forms a cluster with proteins L3 and L14. Requires Zn(2+) as cofactor.

In terms of biological role, binds to the 23S rRNA. The chain is Large ribosomal subunit protein eL24 from Archaeoglobus fulgidus (strain ATCC 49558 / DSM 4304 / JCM 9628 / NBRC 100126 / VC-16).